A 2282-amino-acid polypeptide reads, in one-letter code: Acetyl-CoA carboxylase (2282 aa).

A Biotin carboxylation domain is found at 16–515 (NIEKILIANN…HTGWLDQLIS (500 aa)). Residues 170–360 (YSECNGVPSE…LPATQLQIAM (191 aa)) enclose the ATP-grasp domain. 196–253 (AQRVGFPAMIKASEGGGGKGIRKVTSMEDLESSFRQVQNEVPGSPIFFMKLVSNARHL) provides a ligand contact to ATP. Residues Glu319, Glu331, and Asn333 each coordinate Mn(2+). Arg335 is a catalytic residue. Residues 646-720 (FSQEYDPSIL…APGAIIANLE (75 aa)) form the Biotinyl-binding domain. Position 687 is an N6-biotinyllysine (Lys687). Residues 1109-1129 (GSNSGSPTYGSPLIRSISSSG) show a composition bias toward low complexity. The interval 1109-1141 (GSNSGSPTYGSPLIRSISSSGGSSGGSGFQISP) is disordered. Positions 1495–1851 (PYPIMDAVQR…SGGEMVPIIS (357 aa)) constitute a CoA carboxyltransferase N-terminal domain. A carboxyltransferase region spans residues 1495-2178 (PYPIMDAVQR…EEDKLKLIDK (684 aa)). Positions 1761, 2068, and 2070 each coordinate CoA. Residues 1852-2178 (PIDSPHRDIE…EEDKLKLIDK (327 aa)) form the CoA carboxyltransferase C-terminal domain.

Requires biotin as cofactor. Mn(2+) serves as cofactor.

The protein localises to the cytoplasm. The catalysed reaction is hydrogencarbonate + acetyl-CoA + ATP = malonyl-CoA + ADP + phosphate + H(+). The enzyme catalyses N(6)-biotinyl-L-lysyl-[protein] + hydrogencarbonate + ATP = N(6)-carboxybiotinyl-L-lysyl-[protein] + ADP + phosphate + H(+). The protein operates within lipid metabolism; malonyl-CoA biosynthesis; malonyl-CoA from acetyl-CoA: step 1/1. Catalyzes the rate-limiting reaction in the biogenesis of long-chain fatty acids. Carries out three functions: biotin carboxyl carrier protein, biotin carboxylase and carboxyltransferase. The sequence is that of Acetyl-CoA carboxylase (accA) from Dictyostelium discoideum (Social amoeba).